A 48-amino-acid polypeptide reads, in one-letter code: Large ribosomal subunit protein bL33B (48 aa).

The protein belongs to the bacterial ribosomal protein bL33 family.

The chain is Large ribosomal subunit protein bL33B from Lactococcus lactis subsp. cremoris (strain MG1363).